The following is a 322-amino-acid chain: Corticotropin-releasing factor-binding protein (322 aa).

The first 24 residues, Met-1–Arg-24, serve as a signal peptide directing secretion. Disulfide bonds link Cys-60–Cys-81, Cys-104–Cys-141, Cys-183–Cys-205, Cys-237–Cys-264, and Cys-277–Cys-318. N-linked (GlcNAc...) asparagine glycosylation occurs at Asn-204.

Belongs to the CRF-binding protein family.

The protein resides in the secreted. In terms of biological role, binds CRF and inactivates it. May prevent inappropriate pituitary-adrenal stimulation in pregnancy. The sequence is that of Corticotropin-releasing factor-binding protein (Crhbp) from Rattus norvegicus (Rat).